The sequence spans 317 residues: Ribosomal protein L11 methyltransferase (317 aa).

S-adenosyl-L-methionine contacts are provided by threonine 158, glycine 179, aspartate 201, and asparagine 244.

Belongs to the methyltransferase superfamily. PrmA family.

The protein resides in the cytoplasm. It catalyses the reaction L-lysyl-[protein] + 3 S-adenosyl-L-methionine = N(6),N(6),N(6)-trimethyl-L-lysyl-[protein] + 3 S-adenosyl-L-homocysteine + 3 H(+). Its function is as follows. Methylates ribosomal protein L11. The polypeptide is Ribosomal protein L11 methyltransferase (Streptococcus pyogenes serotype M12 (strain MGAS2096)).